We begin with the raw amino-acid sequence, 4690 residues long: Nonribosomal peptide synthetase sidN (4690 aa).

An adenylation 1 region spans residues 238–656 (ARVRENPGRI…LGRLSSDQIK (419 aa)). The region spanning 779-856 (SSSIPMLQSV…DLDTKAQQAL (78 aa)) is the Carrier 1 domain. Ser-816 carries the O-(pantetheine 4'-phosphoryl)serine modification. A condensation 1 region spans residues 924 to 1175 (APGGKAFIQH…AFGNTMSDRF (252 aa)). Residues 1349–1760 (EFAQKSPNAI…GRKDDLVKIR (412 aa)) form an adenylation 2 region. One can recognise a Carrier 2 domain in the interval 1889-1965 (PAWCIKHRPL…DLINHLSVKR (77 aa)). The residue at position 1926 (Ser-1926) is an O-(pantetheine 4'-phosphoryl)serine. Residues 2001–2285 (PTTVFQDGML…SERLLESQLV (285 aa)) form a condensation 2 region. An adenylation 3 region spans residues 2464-2869 (TWAKTHPEWK…GRKDEQVKVR (406 aa)). The 78-residue stretch at 3002–3079 (RDLTSIEKQI…ELGRMKNALK (78 aa)) folds into the Carrier 3 domain. An O-(pantetheine 4'-phosphoryl)serine modification is found at Ser-3040. Residues 3121–3530 (CMPLQEVLVA…QMESLVTSFT (410 aa)) form a condensation 3 region. One can recognise a Carrier 4 domain in the interval 3564-3637 (SVLEQQIRDV…KLATHIQTTS (74 aa)). Ser-3598 is modified (O-(pantetheine 4'-phosphoryl)serine). Residues 3679–4087 (VYPLTPLQAG…FESIRKHPDE (409 aa)) form a condensation 4 region. The Carrier 5 domain maps to 4119 to 4195 (SAIDQFLDPL…KLCEVAFAKS (77 aa)). O-(pantetheine 4'-phosphoryl)serine is present on Ser-4156. Residues 4262-4589 (WVFKAENGLD…FNAHLNILWN (328 aa)) are condensation 5.

It belongs to the NRP synthetase family.

It participates in siderophore biosynthesis. Nonribosomal peptide synthetase required for the biosynthetis of epichloenin A, an extracellular siderophore that plays a crucial role in endophyte-grass symbioses. SidN assembles epichloenin A by activating and incorporating three trans-anhydromevalonylhydroxyornithine (trans-AMHO), 1 glutamine and 4 glycine moieties. Trans-AMHO is produced from L-ornithine via 2 steps involving a L-ornithine N(5)-monooxygenase and an AHMO-N(5)-transacylase that have still to be identified. The third adenylation domain (A3) of sidN incorporates the hydroxamate groups of the siderophore which forms an octahedral iron complex. The other component amino acids are assembled by sidN adenylation domains A1 and A2. In Epichloe festucae (strain Fl1), this protein is Nonribosomal peptide synthetase sidN.